Consider the following 1355-residue polypeptide: DNA-directed RNA polymerase subunit beta' (1355 aa).

The Zn(2+) site is built by C219, C293, C300, and C303. The tract at residues 1331–1355 (AEVEVDDEVDDDYEDDDEDDDDYED) is disordered.

It belongs to the RNA polymerase beta' chain family. RpoC2 subfamily. As to quaternary structure, in cyanobacteria the RNAP catalytic core is composed of 2 alpha, 1 beta, 1 beta', 1 gamma and 1 omega subunit. When a sigma factor is associated with the core the holoenzyme is formed, which can initiate transcription. It depends on Zn(2+) as a cofactor.

It catalyses the reaction RNA(n) + a ribonucleoside 5'-triphosphate = RNA(n+1) + diphosphate. In terms of biological role, DNA-dependent RNA polymerase catalyzes the transcription of DNA into RNA using the four ribonucleoside triphosphates as substrates. The polypeptide is DNA-directed RNA polymerase subunit beta' (Trichormus variabilis (strain ATCC 29413 / PCC 7937) (Anabaena variabilis)).